Consider the following 301-residue polypeptide: Acetyl-coenzyme A carboxylase carboxyl transferase subunit beta (301 aa).

Residues 25 to 294 (LWIKDPSTGE…NSDAPAPQKP (270 aa)) enclose the CoA carboxyltransferase N-terminal domain.

This sequence belongs to the AccD/PCCB family. As to quaternary structure, acetyl-CoA carboxylase is a heterohexamer composed of biotin carboxyl carrier protein (AccB), biotin carboxylase (AccC) and two subunits each of ACCase subunit alpha (AccA) and ACCase subunit beta (AccD).

The protein localises to the cytoplasm. It catalyses the reaction N(6)-carboxybiotinyl-L-lysyl-[protein] + acetyl-CoA = N(6)-biotinyl-L-lysyl-[protein] + malonyl-CoA. The protein operates within lipid metabolism; malonyl-CoA biosynthesis; malonyl-CoA from acetyl-CoA: step 1/1. In terms of biological role, component of the acetyl coenzyme A carboxylase (ACC) complex. Biotin carboxylase (BC) catalyzes the carboxylation of biotin on its carrier protein (BCCP) and then the CO(2) group is transferred by the transcarboxylase to acetyl-CoA to form malonyl-CoA. The sequence is that of Acetyl-coenzyme A carboxylase carboxyl transferase subunit beta from Brucella canis (strain ATCC 23365 / NCTC 10854 / RM-666).